We begin with the raw amino-acid sequence, 388 residues long: Probable acetyl-CoA acetyltransferase (388 aa).

Cys84 functions as the Acyl-thioester intermediate in the catalytic mechanism. An Isoglutamyl lysine isopeptide (Lys-Gln) (interchain with Q-Cter in protein Pup) cross-link involves residue Lys187. Residues His345 and Cys375 each act as proton acceptor in the active site.

The protein belongs to the thiolase-like superfamily. Thiolase family.

It carries out the reaction 2 acetyl-CoA = acetoacetyl-CoA + CoA. The polypeptide is Probable acetyl-CoA acetyltransferase (Mycolicibacterium smegmatis (strain ATCC 700084 / mc(2)155) (Mycobacterium smegmatis)).